The following is a 218-amino-acid chain: Adenylate kinase (218 aa).

Position 10–15 (10–15 (GAGKGT)) interacts with ATP. Positions 30–59 (STGDMLRAAVKAGTPLGIAAKKIMDEGGLV) are NMP. Residues Thr-31, Arg-36, 57–59 (GLV), 85–88 (GFPR), and Gln-92 each bind AMP. The segment at 122–159 (GRRVHPASGRTYHVKFNPPKVAGKDDLTGEELIQRDDD) is LID. ATP contacts are provided by residues Arg-123 and 132-133 (TY). 2 residues coordinate AMP: Arg-156 and Arg-167. Gly-203 is a binding site for ATP.

It belongs to the adenylate kinase family. As to quaternary structure, monomer.

It is found in the cytoplasm. It carries out the reaction AMP + ATP = 2 ADP. It participates in purine metabolism; AMP biosynthesis via salvage pathway; AMP from ADP: step 1/1. In terms of biological role, catalyzes the reversible transfer of the terminal phosphate group between ATP and AMP. Plays an important role in cellular energy homeostasis and in adenine nucleotide metabolism. This is Adenylate kinase from Janthinobacterium sp. (strain Marseille) (Minibacterium massiliensis).